Consider the following 190-residue polypeptide: dCTP deaminase, dUMP-forming (190 aa).

DCTP contacts are provided by residues 101-106, Asp-119, 127-129, Gln-148, Tyr-162, and Gln-174; these read KSSLGR and TLE. Glu-129 functions as the Proton donor/acceptor in the catalytic mechanism. A disordered region spans residues 163–190; the sequence is GSSQVGSKYQGQRGPTPSKSYQNFVKSN.

Belongs to the dCTP deaminase family. Homotrimer.

It catalyses the reaction dCTP + 2 H2O = dUMP + NH4(+) + diphosphate. It participates in pyrimidine metabolism; dUMP biosynthesis; dUMP from dCTP: step 1/1. Its function is as follows. Bifunctional enzyme that catalyzes both the deamination of dCTP to dUTP and the hydrolysis of dUTP to dUMP without releasing the toxic dUTP intermediate. This chain is dCTP deaminase, dUMP-forming, found in Mycolicibacterium gilvum (strain PYR-GCK) (Mycobacterium gilvum (strain PYR-GCK)).